Here is a 177-residue protein sequence, read N- to C-terminus: Probable chemoreceptor glutamine deamidase CheD (177 aa).

It belongs to the CheD family.

It catalyses the reaction L-glutaminyl-[protein] + H2O = L-glutamyl-[protein] + NH4(+). Functionally, probably deamidates glutamine residues to glutamate on methyl-accepting chemotaxis receptors (MCPs), playing an important role in chemotaxis. This is Probable chemoreceptor glutamine deamidase CheD from Pseudomonas savastanoi pv. phaseolicola (strain 1448A / Race 6) (Pseudomonas syringae pv. phaseolicola (strain 1448A / Race 6)).